A 330-amino-acid polypeptide reads, in one-letter code: L-asparaginase (330 aa).

Positions 4-330 (PQVTILATGG…EAIQKIFSTY (327 aa)) constitute an Asparaginase/glutaminase domain. Thr-14 acts as the O-isoaspartyl threonine intermediate in catalysis. 93–94 (TD) is a substrate binding site.

This sequence belongs to the asparaginase 1 family. As to quaternary structure, homotetramer.

The protein localises to the cytoplasm. It catalyses the reaction L-asparagine + H2O = L-aspartate + NH4(+). The protein is L-asparaginase (ansA) of Wolinella succinogenes (strain ATCC 29543 / DSM 1740 / CCUG 13145 / JCM 31913 / LMG 7466 / NCTC 11488 / FDC 602W) (Vibrio succinogenes).